The primary structure comprises 247 residues: NAD-dependent protein deacetylase 2 (247 aa).

Residues 1–247 (MDQIRQLAQW…ASVRKQIQAE (247 aa)) form the Deacetylase sirtuin-type domain. Residues A23, T27, F34, R35, Q103, I105, D106, and H121 each coordinate NAD(+). F34 is a nicotinamide binding site. Residues I105 and D106 each contribute to the nicotinamide site. H121 (proton acceptor) is an active-site residue. Residues C129, C132, C149, and C152 each coordinate Zn(2+). NAD(+)-binding residues include T188, S189, N215, and I233.

This sequence belongs to the sirtuin family. Class U subfamily. Zn(2+) is required as a cofactor.

Its subcellular location is the cytoplasm. It catalyses the reaction N(6)-acetyl-L-lysyl-[protein] + NAD(+) + H2O = 2''-O-acetyl-ADP-D-ribose + nicotinamide + L-lysyl-[protein]. In terms of biological role, NAD-dependent protein deacetylase which modulates the activities of several enzymes which are inactive in their acetylated form. The polypeptide is NAD-dependent protein deacetylase 2 (Geobacillus kaustophilus (strain HTA426)).